The following is a 309-amino-acid chain: Dicarboxylate carrier UCP2 (309 aa).

Over 1 to 16 (MVGFKATDVPPTATVK) the chain is Mitochondrial intermembrane. 3 Solcar repeats span residues 11–106 (PTAT…VKQF), 114–203 (AGIG…IKDT), and 212–297 (DDLP…LKRA). Positions 16 to 63 (KFLGAGTAACIADLITFPLDTAKVRLQIQGESQGLVRTAASAQYRGVL) are important for interaction with long-chain fatty acids. A helical membrane pass occupies residues 17–40 (FLGAGTAACIADLITFPLDTAKVR). Over 41-77 (LQIQGESQGLVRTAASAQYRGVLGTILTMVRTEGPRS) the chain is Mitochondrial matrix. The chain crosses the membrane as a helical span at residues 78–103 (LYNGLVAGLQRQMSFASVRIGLYDSV). The Mitochondrial intermembrane portion of the chain corresponds to 104–119 (KQFYTKGSEHAGIGSR). Residues 120–145 (LLAGSTTGALAVAVAQPTDVVKVRFQ) traverse the membrane as a helical segment. Over 146–173 (AQARAGGGRRYQSTVEAYKTIAREEGIR) the chain is Mitochondrial matrix. The helical transmembrane segment at 174 to 199 (GLWKGTSPNVARNAIVNCAELVTYDL) threads the bilayer. Residues 200 to 217 (IKDTLLKANLMTDDLPCH) are Mitochondrial intermembrane-facing. The chain crosses the membrane as a helical span at residues 218 to 242 (FTSAFGAGFCTTVIASPVDVVKTRY). At 243 to 268 (MNSALGQYHSAGHCALTMLRKEGPRA) the chain is on the mitochondrial matrix side. The chain crosses the membrane as a helical span at residues 269-294 (FYKGFMPSFLRLGSWNVVMFVTYEQL). The important for interaction with long-chain fatty acids stretch occupies residues 278-285 (LRLGSWNV). Residues 295-309 (KRALMAAYQSREAPF) lie on the Mitochondrial intermembrane side of the membrane.

This sequence belongs to the mitochondrial carrier (TC 2.A.29) family. In terms of assembly, homotetramer. Adopts an asymmetrical dimer of dimers functional form. Interacts with MICU1 (when methylated); leading to decrease the calcium sensitivity of MICU1. Widely expressed. Highest in spleen, lung, white and brown adipose tissues. 4-6 times higher levels are detected in white adipose tissue of ob/ob and db/db mice when compared to lean littermates. Expressed in neurons of the ventromedial nucleus of the hypothalamus (at protein level). Expressed in thymocytes (at protein level).

The protein localises to the mitochondrion inner membrane. It carries out the reaction L-aspartate(out) + phosphate(in) + H(+)(in) = L-aspartate(in) + phosphate(out) + H(+)(out). It catalyses the reaction oxaloacetate(out) + phosphate(in) + H(+)(in) = oxaloacetate(in) + phosphate(out) + H(+)(out). The catalysed reaction is (S)-malate(out) + phosphate(in) + H(+)(in) = (S)-malate(in) + phosphate(out) + H(+)(out). The enzyme catalyses malonate(out) + phosphate(in) + H(+)(in) = malonate(in) + phosphate(out) + H(+)(out). It carries out the reaction sulfate(out) + phosphate(in) + H(+)(in) = sulfate(in) + phosphate(out) + H(+)(out). It catalyses the reaction (S)-malate(out) = (S)-malate(in). The catalysed reaction is L-aspartate(out) = L-aspartate(in). The enzyme catalyses phosphate(in) = phosphate(out). It carries out the reaction chloride(in) = chloride(out). It catalyses the reaction H(+)(in) = H(+)(out). The catalysed reaction is a long-chain fatty acid(out) = a long-chain fatty acid(in). Proton conductance is activated by free long-chain fatty acids and allosterically inhibited by purine nucleotides. Could be constitutively inhibited by GDP. In terms of biological role, antiporter that exports dicarboxylate intermediates of the Krebs cycle in exchange for phosphate plus a proton across the inner membrane of mitochondria, a process driven by mitochondrial motive force with an overall impact on glycolysis, glutaminolysis and glutathione-dependent redox balance. Continuous export of oxaloacetate and related four-carbon dicarboxylates from mitochondrial matrix into the cytosol negatively regulates the oxidation of acetyl-CoA substrates via the Krebs cycle lowering the ATP/ADP ratio and reactive oxygen species (ROS) production. May mediate inducible proton entry into the mitochondrial matrix affecting ATP turnover as a protection mechanism against oxidative stress. The proton currents are most likely associated with fatty acid flipping across the inner membrane of mitochondria in a metabolic process regulated by free fatty acids and purine nucleotides. Regulates the use of glucose as a source of energy. Required for glucose-induced DRP1-dependent mitochondrial fission and neuron activation in the ventromedial nucleus of the hypothalamus (VMH). This mitochondrial adaptation mechanism modulates the VMH pool of glucose-excited neurons with an impact on systemic glucose homeostasis. Regulates ROS levels and metabolic reprogramming of macrophages during the resolution phase of inflammation. Attenuates ROS production in response to IL33 to preserve the integrity of the Krebs cycle required for persistent production of itaconate and subsequent GATA3-dependent differentiation of inflammation-resolving alternatively activated macrophages. Can unidirectionally transport anions including L-malate, L-aspartate, phosphate and chloride ions. Does not mediate adaptive thermogenesis. The sequence is that of Dicarboxylate carrier UCP2 (Ucp2) from Mus musculus (Mouse).